We begin with the raw amino-acid sequence, 61 residues long: Translational regulator CsrA (61 aa).

It belongs to the CsrA/RsmA family. In terms of assembly, homodimer; the beta-strands of each monomer intercalate to form a hydrophobic core, while the alpha-helices form wings that extend away from the core.

The protein resides in the cytoplasm. Its function is as follows. A key translational regulator that binds mRNA to regulate translation initiation and/or mRNA stability. Mediates global changes in gene expression, shifting from rapid growth to stress survival by linking envelope stress, the stringent response and the catabolite repression systems. Usually binds in the 5'-UTR; binding at or near the Shine-Dalgarno sequence prevents ribosome-binding, repressing translation, binding elsewhere in the 5'-UTR can activate translation and/or stabilize the mRNA. Its function is antagonized by small RNA(s). The sequence is that of Translational regulator CsrA from Actinobacillus succinogenes (strain ATCC 55618 / DSM 22257 / CCUG 43843 / 130Z).